A 191-amino-acid chain; its full sequence is Calcium and integrin-binding protein 1 (191 aa).

A lipid anchor (N-myristoyl glycine) is attached at Gly-2. EF-hand domains lie at Thr-103–Glu-138 and Glu-148–Phe-183. The Ca(2+) site is built by Asp-116, Asp-118, Asp-120, Thr-122, Asp-127, Asp-161, Asp-163, Asp-165, Thr-167, and Glu-172. Asp-118 carries the phosphoserine modification.

Monomer. Interacts with MYO1C. Interacts (via C-terminal region) with PPP3R1 and CACNA1C; the interactions increase upon cardiomyocytes hypertrophy. Interacts with the heterodimeric integrin alpha-IIb/beta3 (ITGA2B-ITGB3). Interacts with ITGA2B (via cytoplasmic domain); the interaction is direct and calcium-dependent. Interacts with the protein kinases PLK2/SNK and PRKDC (via the region immediately upstream of the kinase domain). Interacts with PLK3; the interaction inhibits PLK3 kinase activity. Interacts with PSEN2. Interacts (via C-terminus) with F8. Interacts with NBR1 (via C-terminus). Interacts with FEZ1 (via C-terminus). Interacts with UBR5 (via C-terminus); the interaction is sensitive to DNA damage, and may target CIB1 for ubiquitin-mediated degradation. Interacts with IFI6; the interaction is direct. Interacts with BCL2. Interacts with ITPR3; the interaction occurs in a calcium-dependent manner. Interacts with PTK2/FAK1. Interacts with MAP3K5; the interaction inhibits MAP3K5 activation by phosphorylation, and its subsequent interaction with TRAF2. Isoform 2 interacts with PRKD2 (via N-terminal AP-rich region), PTK2/FAK1 and PAK1. Interacts with TAS1R2 (via C-terminus); the interaction is independent of the myristoylation state of CIB1. Interacts (via C-terminal region) with STMN2 (via the N-terminal region); the interaction is direct, occurs in a calcium-dependent manner and attenuates the STMN2-induced neurite outgrowth inhibition. Interacts with SPHK1, the interaction occurs in a calcium-dependent manner. Interacts with ITGA2B (via C-terminal cytoplasmic tail); the interaction occurs upon platelet aggregation and is stabilized/increased in a calcium and magnesium-dependent manner. Interacts with PAK1 (via N-terminal region); the interaction is direct and occurs in a calcium-dependent manner. Interacts with RAC3 (via C-terminal region); the interaction induces their association with the cytoskeleton upon alpha-IIb/beta3 integrin-mediated adhesion. Interacts with ITGA5 and ITGAV. Interacts and forms a complex with TMC6 and TMC8; the interaction stabilizes each component of the complex. In terms of assembly, (Microbial infection) Interacts with human papillomavirus 4/HPV4 protein E8, human papillomavirus 5/HPV5 protein E1, and human papillomavirus 16/HPV16 proteins E2 and E5. In terms of processing, phosphorylation of isoform 2 at Ser-118 by PRKD2 increases its ability to stimulate tumor angiogenesis. As to expression, ubiquitously expressed. Expressed in the epidermis, hair follicles and keratinocytes. Detected in platelets and in cell lines of megakaryocytic and erythrocytic lineages. Both isoform 1 and isoform 2 are detected in various cancer cell lines, with isoform 2 being the predominant form (at protein level).

It localises to the membrane. Its subcellular location is the cell membrane. The protein localises to the sarcolemma. It is found in the apical cell membrane. The protein resides in the cell projection. It localises to the ruffle membrane. Its subcellular location is the filopodium tip. The protein localises to the growth cone. It is found in the lamellipodium. The protein resides in the cytoplasm. It localises to the cytoskeleton. Its subcellular location is the microtubule organizing center. The protein localises to the centrosome. It is found in the perinuclear region. The protein resides in the nucleus. It localises to the neuron projection. Its subcellular location is the perikaryon. The protein localises to the golgi apparatus. It is found in the trans-Golgi network. Its function is as follows. Calcium-binding protein that plays a role in the regulation of numerous cellular processes, such as cell differentiation, cell division, cell proliferation, cell migration, thrombosis, angiogenesis, cardiac hypertrophy and apoptosis. Involved in bone marrow megakaryocyte differentiation by negatively regulating thrombopoietin-mediated signaling pathway. Participates in the endomitotic cell cycle of megakaryocyte, a form of mitosis in which both karyokinesis and cytokinesis are interrupted. Plays a role in integrin signaling by negatively regulating alpha-IIb/beta3 activation in thrombin-stimulated megakaryocytes preventing platelet aggregation. Up-regulates PTK2/FAK1 activity, and is also needed for the recruitment of PTK2/FAK1 to focal adhesions; it thus appears to play an important role in focal adhesion formation. Positively regulates cell migration on fibronectin in a CDC42-dependent manner, the effect being negatively regulated by PAK1. Functions as a negative regulator of stress activated MAP kinase (MAPK) signaling pathways. Down-regulates inositol 1,4,5-trisphosphate receptor-dependent calcium signaling. Involved in sphingosine kinase SPHK1 translocation to the plasma membrane in a N-myristoylation-dependent manner preventing TNF-alpha-induced apoptosis. Regulates serine/threonine-protein kinase PLK3 activity for proper completion of cell division progression. Plays a role in microtubule (MT) dynamics during neuronal development; disrupts the MT depolymerization activity of STMN2 attenuating NGF-induced neurite outgrowth and the MT reorganization at the edge of lamellipodia. Promotes cardiomyocyte hypertrophy via activation of the calcineurin/NFAT signaling pathway. Stimulates calcineurin PPP3R1 activity by mediating its anchoring to the sarcolemma. In ischemia-induced (pathological or adaptive) angiogenesis, stimulates endothelial cell proliferation, migration and microvessel formation by activating the PAK1 and ERK1/ERK2 signaling pathway. Also promotes cancer cell survival and proliferation. May regulate cell cycle and differentiation of spermatogenic germ cells, and/or differentiation of supporting Sertoli cells. Forms a complex with TMC6/EVER1 and TMC8/EVER2 in lymphocytes and keratynocytes where CIB1 stabilizes TMC6 and TMC8 levels and reciprocally. Acts as a restriction factor that promotes keratinocyte-intrinsic immunity to human beta-papillomaviruses (HPVs). In terms of biological role, plays a regulatory role in angiogenesis and tumor growth by mediating PKD/PRKD2-induced vascular endothelial growth factor A (VEGFA) secretion. This Homo sapiens (Human) protein is Calcium and integrin-binding protein 1 (CIB1).